Reading from the N-terminus, the 34-residue chain is Conotoxin S4.3 (34 aa).

Gln-1 is modified (pyrrolidone carboxylic acid). Position 3 is a 4-carboxyglutamate (Glu-3). Ser-7 carries O-linked (HexNAc...) serine glycosylation. Residue Thr-9 is glycosylated (O-linked (HexNAc...) threonine). 4-hydroxyproline is present on residues Pro-17, Pro-22, Pro-31, and Pro-32.

The protein belongs to the conotoxin A superfamily. In terms of processing, contains 3 disulfide bonds. Expressed by the venom duct.

The protein resides in the secreted. Its function is as follows. Probable neurotoxin with ion channel inhibitor activity. This Conus striatus (Striated cone) protein is Conotoxin S4.3.